Reading from the N-terminus, the 388-residue chain is Mannitol-1-phosphate 5-dehydrogenase (388 aa).

3–14 lines the NAD(+) pocket; it reads ALHFGAGNIGRG.

Belongs to the mannitol dehydrogenase family.

It carries out the reaction D-mannitol 1-phosphate + NAD(+) = beta-D-fructose 6-phosphate + NADH + H(+). In Buchnera aphidicola subsp. Schizaphis graminum (strain Sg), this protein is Mannitol-1-phosphate 5-dehydrogenase.